A 352-amino-acid chain; its full sequence is Histidine biosynthesis bifunctional protein HisB (352 aa).

The histidinol-phosphatase stretch occupies residues Met-1 to Phe-164. Asp-9 serves as the catalytic Nucleophile. Mg(2+)-binding residues include Asp-9 and Asp-11. Residue Asp-11 is the Proton donor of the active site. The Zn(2+) site is built by Cys-93, His-95, Cys-101, and Cys-103. Mg(2+) is bound at residue Asp-130. Positions Arg-165 to Ile-352 are imidazoleglycerol-phosphate dehydratase.

This sequence in the N-terminal section; belongs to the histidinol-phosphatase family. In the C-terminal section; belongs to the imidazoleglycerol-phosphate dehydratase family. Mg(2+) is required as a cofactor. Zn(2+) serves as cofactor.

It is found in the cytoplasm. The enzyme catalyses D-erythro-1-(imidazol-4-yl)glycerol 3-phosphate = 3-(imidazol-4-yl)-2-oxopropyl phosphate + H2O. It catalyses the reaction L-histidinol phosphate + H2O = L-histidinol + phosphate. It functions in the pathway amino-acid biosynthesis; L-histidine biosynthesis; L-histidine from 5-phospho-alpha-D-ribose 1-diphosphate: step 6/9. It participates in amino-acid biosynthesis; L-histidine biosynthesis; L-histidine from 5-phospho-alpha-D-ribose 1-diphosphate: step 8/9. The protein is Histidine biosynthesis bifunctional protein HisB of Campylobacter jejuni subsp. jejuni serotype O:6 (strain 81116 / NCTC 11828).